The following is a 1001-amino-acid chain: Phosphatidylinositol 4,5-bisphosphate 5-phosphatase A (1001 aa).

The span at 1-12 (MEGQSRSGSAKS) shows a compositional bias: polar residues. Disordered stretches follow at residues 1 to 130 (MEGQ…VASV) and 144 to 412 (SASA…QPTC). The RSXSXX motif 1 motif lies at 6 to 11 (RSGSAK). The segment covering 13-28 (GTRTGLGPLPGTHGAL) has biased composition (low complexity). Polar residues predominate over residues 29–42 (QTGTPSKKVNSSFQ). An Asymmetric dimethylarginine; alternate modification is found at arginine 56. Residue arginine 56 is modified to Omega-N-methylarginine; alternate. Position 65 is an omega-N-methylarginine (arginine 65). Asymmetric dimethylarginine is present on arginine 76. Asymmetric dimethylarginine; alternate is present on arginine 83. Position 83 is an omega-N-methylarginine; alternate (arginine 83). Over residues 161-174 (SPTSRDQKQLSPTS) the composition is skewed to polar residues. Serine 171 is subject to Phosphoserine. Low complexity predominate over residues 180-196 (ALATSGLSLALASQEQP). Residues 197 to 210 (PQSPSSPSPVPSPV) show a composition bias toward pro residues. The segment covering 284–294 (ARPEAPRHSPE) has biased composition (basic and acidic residues). Residues serine 292 and serine 325 each carry the phosphoserine modification. Positions 338–348 (VPPPLPKPPRS) are enriched in pro residues. The SH3-binding motif lies at 346–351 (PRSPSR). Composition is skewed to low complexity over residues 349–361 (PSRSPSRSPNRSP) and 394–411 (SPVATATSPTSSWSAQPT). The RSXSXX motif 2 motif lies at 351 to 356 (RSPSRS). Residues 420–723 (ITVVTWNVGT…SDHKPVAARF (304 aa)) are catalytic. The required for ruffle localization stretch occupies residues 724-835 (LLQFAFRDDV…IGVTEPFQIS (112 aa)). The interval 837–1001 (PTSESASSST…LGLEDGGLGP (165 aa)) is disordered. Positions 838–853 (TSESASSSTDSSGTSS) are enriched in low complexity. 2 short sequence motifs (RSXSXX motif) span residues 869-874 (RSPSPG) and 880-885 (RSRSPG). Phosphoserine is present on serine 898. Composition is skewed to low complexity over residues 905 to 917 (SRSPSPQSRQLPR) and 925 to 936 (SSGSRGSSEEGP). The RSXSXX motif 5 signature appears at 906 to 911 (RSPSPQ). Pro residues predominate over residues 937 to 949 (SGPPGPWAFPPAV). Phosphoserine is present on serine 985.

The protein belongs to the inositol 1,4,5-trisphosphate 5-phosphatase type II family. In terms of processing, phosphorylated on Ser/Thr residues. In terms of tissue distribution, expressed in heart, brain, kidney, stomach, small intestine and lung. Not expressed in spleen, thymus, skeletal muscle, testis and skin.

It is found in the cytoplasm. It carries out the reaction 1D-myo-inositol 1,4,5-trisphosphate + H2O = 1D-myo-inositol 1,4-bisphosphate + phosphate. The enzyme catalyses 1D-myo-inositol 1,3,4,5-tetrakisphosphate + H2O = 1D-myo-inositol 1,3,4-trisphosphate + phosphate. The catalysed reaction is a 1,2-diacyl-sn-glycero-3-phospho-(1D-myo-inositol-4,5-bisphosphate) + H2O = a 1,2-diacyl-sn-glycero-3-phospho-(1D-myo-inositol 4-phosphate) + phosphate. Inositol 5-phosphatase, which converts inositol 1,4,5-trisphosphate to inositol 1,4-bisphosphate. Also converts phosphatidylinositol 4,5-bisphosphate to phosphatidylinositol 4-phosphate and inositol 1,3,4,5-tetrakisphosphate to inositol 1,3,4-trisphosphate in vitro. May be involved in modulation of the function of inositol and phosphatidylinositol polyphosphate-binding proteins that are present at membranes ruffles. The chain is Phosphatidylinositol 4,5-bisphosphate 5-phosphatase A (Inpp5j) from Rattus norvegicus (Rat).